A 145-amino-acid chain; its full sequence is uncharacterized protein (145 aa).

This sequence belongs to the methyltransferase superfamily.

Its function is as follows. Probable methyltransferase. This is an uncharacterized protein from Schizosaccharomyces pombe (strain 972 / ATCC 24843) (Fission yeast).